A 304-amino-acid polypeptide reads, in one-letter code: uncharacterized protein (304 aa).

This is an uncharacterized protein from Methanocaldococcus jannaschii (strain ATCC 43067 / DSM 2661 / JAL-1 / JCM 10045 / NBRC 100440) (Methanococcus jannaschii).